A 235-amino-acid polypeptide reads, in one-letter code: tRNA (adenine(37)-N6)-methyltransferase (235 aa).

The region spanning 6 to 147 (FEQIGVIRSP…YLPFAESLPD (142 aa)) is the TsaA-like domain. S-adenosyl-L-methionine is bound by residues 23 to 25 (PRQ), 64 to 65 (HQ), Arg92, and 127 to 130 (VDGT).

It belongs to the tRNA methyltransferase O family. In terms of assembly, homodimer.

The enzyme catalyses N(6)-L-threonylcarbamoyladenosine(37) in tRNA + S-adenosyl-L-methionine = N(6)-methyl,N(6)-L-threonylcarbamoyladenosine(37) in tRNA + S-adenosyl-L-homocysteine + H(+). S-adenosyl-L-methionine-dependent methyltransferase responsible for the addition of the methyl group in the formation of N6-methyl-N6-threonylcarbamoyladenosine at position 37 (m(6)t(6)A37) of the tRNA anticodon loop of tRNA(Thr)(GGU) that read codons starting with adenosine. The methyl group of m(6)t(6)A37 appears to slightly improve the efficiency of the tRNA decoding ability. The chain is tRNA (adenine(37)-N6)-methyltransferase from Escherichia coli (strain K12).